Reading from the N-terminus, the 228-residue chain is UPF0173 metal-dependent hydrolase Tpen_1493 (228 aa).

This sequence belongs to the UPF0173 family.

The protein is UPF0173 metal-dependent hydrolase Tpen_1493 of Thermofilum pendens (strain DSM 2475 / Hrk 5).